The sequence spans 329 residues: tRNA(Ile)-lysidine synthase, chloroplastic (329 aa).

An ATP-binding site is contributed by 32–37; sequence SGGQDS.

It belongs to the tRNA(Ile)-lysidine synthase family.

It is found in the plastid. It localises to the chloroplast. It carries out the reaction cytidine(34) in tRNA(Ile2) + L-lysine + ATP = lysidine(34) in tRNA(Ile2) + AMP + diphosphate + H(+). Functionally, ligates lysine onto the cytidine present at position 34 of the AUA codon-specific tRNA(Ile) that contains the anticodon CAU, in an ATP-dependent manner. Cytidine is converted to lysidine, thus changing the amino acid specificity of the tRNA from methionine to isoleucine. This is tRNA(Ile)-lysidine synthase, chloroplastic from Pyropia yezoensis (Susabi-nori).